Here is a 127-residue protein sequence, read N- to C-terminus: MAKTSTKKRVKRVVSDGIAHIHASFNNTIVTITDRQGNTLAWATSGGSGFRGSRKSTPFAAQVAAEKAGRIVQEMGMKNLEVRVKGPGPGRESAARSLNNVGFKVTNIADITPIPHNGCRPPKKRRV.

This sequence belongs to the universal ribosomal protein uS11 family. In terms of assembly, part of the 30S ribosomal subunit. Interacts with proteins S7 and S18. Binds to IF-3.

Functionally, located on the platform of the 30S subunit, it bridges several disparate RNA helices of the 16S rRNA. Forms part of the Shine-Dalgarno cleft in the 70S ribosome. This Nitrosococcus oceani (strain ATCC 19707 / BCRC 17464 / JCM 30415 / NCIMB 11848 / C-107) protein is Small ribosomal subunit protein uS11.